Here is a 548-residue protein sequence, read N- to C-terminus: Chaperone Ric-8A (548 aa).

Disordered stretches follow at residues 443–484 (DPGH…EGMT) and 517–548 (GKMTSMEPHELHHLASQQFGESNNSDSDSDTN).

The protein belongs to the synembryn family.

It localises to the cytoplasm. The protein resides in the cell cortex. Its function is as follows. Chaperone that specifically binds and folds nascent G alpha proteins prior to G protein heterotrimer formation, promoting their stability and activity: folds GNAI1, GNAO1, GNA13 and GNAQ. Does not fold G(s) G-alpha proteins GNAS nor GNAL. Also acts as a guanine nucleotide exchange factor (GEF) for G alpha proteins by stimulating exchange of bound GDP for free GTP. The protein is Chaperone Ric-8A (ric8a) of Danio rerio (Zebrafish).